The primary structure comprises 176 residues: Peroxiredoxin AHP1 (176 aa).

Serine 2 bears the N-acetylserine mark. The region spanning 9-176 is the Thioredoxin domain; the sequence is FPAGDYKFQY…SSVESVLAHL (168 aa). Residue serine 28 is modified to Phosphoserine. A Glycyl lysine isopeptide (Lys-Gly) (interchain with G-Cter in URM1) cross-link involves residue lysine 32. Lysine 48 is covalently cross-linked (Glycyl lysine isopeptide (Lys-Gly) (interchain with G-Cter in ubiquitin); alternate). Residue lysine 48 forms a Glycyl lysine isopeptide (Lys-Gly) (interchain with G-Cter in URM1); alternate linkage. Phosphoserine is present on serine 59. The Cysteine sulfenic acid (-SOH) intermediate role is filled by cysteine 62. Cysteine persulfide is present on cysteine 62. Residue lysine 79 forms a Glycyl lysine isopeptide (Lys-Gly) (interchain with G-Cter in URM1) linkage. Lysine 81 participates in a covalent cross-link: Glycyl lysine isopeptide (Lys-Gly) (interchain with G-Cter in ubiquitin); alternate. Lysine 81 participates in a covalent cross-link: Glycyl lysine isopeptide (Lys-Gly) (interchain with G-Cter in URM1); alternate. Lysine 107 participates in a covalent cross-link: Glycyl lysine isopeptide (Lys-Gly) (interchain with G-Cter in URM1). Residue lysine 113 forms a Glycyl lysine isopeptide (Lys-Gly) (interchain with G-Cter in ubiquitin) linkage. Serine 116 bears the Phosphoserine mark. A Cysteine persulfide modification is found at cysteine 120. A Glycyl lysine isopeptide (Lys-Gly) (interchain with G-Cter in URM1) cross-link involves residue lysine 124. Lysine 156 participates in a covalent cross-link: Glycyl lysine isopeptide (Lys-Gly) (interchain with G-Cter in URM1); alternate. Lysine 156 is covalently cross-linked (Glycyl lysine isopeptide (Lys-Gly) (interchain with G-Cter in SUMO); alternate).

It belongs to the peroxiredoxin family. Prx5 subfamily. As to quaternary structure, homodimer; disulfide-linked, upon oxidation. Conjugated to URM1, a ubiquitin-like protein, in response to oxidative stresses. The attachment of URM1 to lysine residues exclusively depends on the presence of a peroxidatic cysteine in the target protein, with low specificity for the particular residue, motif, or structural context at which urmylation can occur. The URM1-conjugation reaction is mechanistically and directly coupled to the process of cysteine persulfidation, transfering the sulfur atom of the URM1 thiocarboxyl group to redox-active cysteine residues in the target protein if it is exposed to oxidative conditions. In terms of processing, persulfidated on specific redox-active cysteine residues. Persulfidation (also called protein S-sulfhydration) may provide a molecular mechanism that enables cells to protect vulnerable cysteine residues from reactive oxygen species (ROS) under stress conditions.

It localises to the cytoplasm. The enzyme catalyses a hydroperoxide + [thioredoxin]-dithiol = an alcohol + [thioredoxin]-disulfide + H2O. Thiol-specific peroxidase that catalyzes the reduction of hydrogen peroxide and organic hydroperoxides to water and alcohols, respectively. Plays a role in cell protection against oxidative stress by detoxifying peroxides and as sensor of hydrogen peroxide-mediated signaling events. Preferentially eliminates organic peroxides rather than hydrogen peroxide. Relays alkyl hydroperoxides as a signal to the transcription factor CAD1/YAP2 by inducing the formation of intramolecular disulfide bonds in CAD1, which causes its nuclear accumulation and activation. Involved in cellular Mn(2+) homeostasis. In Saccharomyces cerevisiae (strain ATCC 204508 / S288c) (Baker's yeast), this protein is Peroxiredoxin AHP1.